The following is a 1036-amino-acid chain: Phytosulfokine receptor 2 (1036 aa).

The signal sequence occupies residues methionine 1 to serine 16. N-linked (GlcNAc...) asparagine glycans are attached at residues asparagine 36 and asparagine 45. LRR repeat units lie at residues glutamate 89 to leucine 111, glutamine 113 to lysine 136, leucine 137 to proline 159, glycine 160 to serine 182, glycine 185 to serine 207, serine 209 to isoleucine 231, glutamate 233 to serine 256, glycine 257 to leucine 279, glutamine 281 to cysteine 303, lysine 305 to glycine 326, aspartate 329 to cysteine 351, lysine 353 to leucine 375, serine 377 to leucine 398, asparagine 403 to threonine 423, asparagine 427 to lysine 450, lysine 451 to methionine 473, and serine 475 to lysine 498. N-linked (GlcNAc...) asparagine glycosylation is found at asparagine 142, asparagine 165, and asparagine 205. 3 N-linked (GlcNAc...) asparagine glycosylation sites follow: asparagine 251, asparagine 254, and asparagine 278. Residues asparagine 313 and asparagine 323 are each glycosylated (N-linked (GlcNAc...) asparagine). N-linked (GlcNAc...) asparagine glycans are attached at residues asparagine 385, asparagine 403, and asparagine 421. Asparagine 483, asparagine 504, asparagine 523, asparagine 549, and asparagine 571 each carry an N-linked (GlcNAc...) asparagine glycan. LRR repeat units lie at residues glutamate 561–leucine 583 and asparagine 585–serine 606. Residues isoleucine 680–leucine 700 traverse the membrane as a helical segment. Position 751 is a phosphothreonine (threonine 751). Residues phenylalanine 754 to leucine 1025 form the Protein kinase domain. Residues isoleucine 760–valine 768 and lysine 782 each bind ATP. Tyrosine 827 and tyrosine 867 each carry phosphotyrosine. Aspartate 880 functions as the Proton acceptor in the catalytic mechanism. Tyrosine 922 bears the Phosphotyrosine mark. One copy of the LRR 20 repeat lies at arginine 995–glutamate 1020.

It belongs to the protein kinase superfamily. Ser/Thr protein kinase family.

It localises to the cell membrane. The enzyme catalyses L-seryl-[protein] + ATP = O-phospho-L-seryl-[protein] + ADP + H(+). It carries out the reaction L-threonyl-[protein] + ATP = O-phospho-L-threonyl-[protein] + ADP + H(+). Its function is as follows. Phytosulfokine receptor with a serine/threonine-protein kinase activity. The chain is Phytosulfokine receptor 2 (PSKR2) from Arabidopsis thaliana (Mouse-ear cress).